Consider the following 352-residue polypeptide: Chalcone synthase C (352 aa).

The active site involves cysteine 170.

Belongs to the thiolase-like superfamily. Chalcone/stilbene synthases family.

The catalysed reaction is (E)-4-coumaroyl-CoA + 3 malonyl-CoA + 3 H(+) = 2',4,4',6'-tetrahydroxychalcone + 3 CO2 + 4 CoA. It functions in the pathway secondary metabolite biosynthesis; flavonoid biosynthesis. Its function is as follows. The primary product of this enzyme is 4,2',4',6'-tetrahydroxychalcone (also termed naringenin-chalcone or chalcone) which can under specific conditions spontaneously isomerize into naringenin. This Ipomoea purpurea (Common morning glory) protein is Chalcone synthase C (CHSC).